Here is a 382-residue protein sequence, read N- to C-terminus: 1-deoxy-D-xylulose 5-phosphate reductoisomerase (382 aa).

Residues threonine 10, glycine 11, serine 12, isoleucine 13, glycine 36, and asparagine 122 each coordinate NADPH. A 1-deoxy-D-xylulose 5-phosphate-binding site is contributed by lysine 123. Residue glutamate 124 coordinates NADPH. Aspartate 148 contacts Mn(2+). Positions 149, 150, 174, and 197 each coordinate 1-deoxy-D-xylulose 5-phosphate. Residue glutamate 150 coordinates Mn(2+). Glycine 203 contributes to the NADPH binding site. Serine 210, asparagine 215, lysine 216, and glutamate 219 together coordinate 1-deoxy-D-xylulose 5-phosphate. Glutamate 219 contributes to the Mn(2+) binding site.

It belongs to the DXR family. It depends on Mg(2+) as a cofactor. Mn(2+) is required as a cofactor.

It carries out the reaction 2-C-methyl-D-erythritol 4-phosphate + NADP(+) = 1-deoxy-D-xylulose 5-phosphate + NADPH + H(+). Its pathway is isoprenoid biosynthesis; isopentenyl diphosphate biosynthesis via DXP pathway; isopentenyl diphosphate from 1-deoxy-D-xylulose 5-phosphate: step 1/6. Catalyzes the NADPH-dependent rearrangement and reduction of 1-deoxy-D-xylulose-5-phosphate (DXP) to 2-C-methyl-D-erythritol 4-phosphate (MEP). This chain is 1-deoxy-D-xylulose 5-phosphate reductoisomerase, found in Chlorobium chlorochromatii (strain CaD3).